Reading from the N-terminus, the 213-residue chain is Kynurenine formamidase (213 aa).

Trp-18 contributes to the substrate binding site. Zn(2+)-binding residues include His-48, His-52, and Asp-54. His-58 (proton donor/acceptor) is an active-site residue. Zn(2+) is bound by residues His-160 and Glu-172.

The protein belongs to the Cyclase 1 superfamily. KynB family. In terms of assembly, homodimer. It depends on Zn(2+) as a cofactor.

The enzyme catalyses N-formyl-L-kynurenine + H2O = L-kynurenine + formate + H(+). It functions in the pathway amino-acid degradation; L-tryptophan degradation via kynurenine pathway; L-kynurenine from L-tryptophan: step 2/2. Its function is as follows. Catalyzes the hydrolysis of N-formyl-L-kynurenine to L-kynurenine, the second step in the kynurenine pathway of tryptophan degradation. The protein is Kynurenine formamidase of Burkholderia ambifaria (strain MC40-6).